The primary structure comprises 410 residues: Ribulose bisphosphate carboxylase large chain (410 aa).

Positions 100 and 150 each coordinate substrate. K152 acts as the Proton acceptor in catalysis. K154 provides a ligand contact to substrate. The Mg(2+) site is built by K178, D180, and E181. Position 178 is an N6-carboxylysine (K178). H271 functions as the Proton acceptor in the catalytic mechanism. The substrate site is built by R272, H304, and S356.

The protein belongs to the RuBisCO large chain family. Type I subfamily. In terms of assembly, heterohexadecamer of 8 large chains and 8 small chains; disulfide-linked. The disulfide link is formed within the large subunit homodimers. Requires Mg(2+) as cofactor. The disulfide bond which can form in the large chain dimeric partners within the hexadecamer appears to be associated with oxidative stress and protein turnover.

It localises to the plastid. The protein resides in the chloroplast. It carries out the reaction 2 (2R)-3-phosphoglycerate + 2 H(+) = D-ribulose 1,5-bisphosphate + CO2 + H2O. The catalysed reaction is D-ribulose 1,5-bisphosphate + O2 = 2-phosphoglycolate + (2R)-3-phosphoglycerate + 2 H(+). Its function is as follows. RuBisCO catalyzes two reactions: the carboxylation of D-ribulose 1,5-bisphosphate, the primary event in carbon dioxide fixation, as well as the oxidative fragmentation of the pentose substrate in the photorespiration process. Both reactions occur simultaneously and in competition at the same active site. This chain is Ribulose bisphosphate carboxylase large chain (rbcL), found in Gleichenia japonica (Urajiro).